Reading from the N-terminus, the 597-residue chain is uncharacterized protein (597 aa).

Residues methionine 1 to arginine 23 are compositionally biased toward basic and acidic residues. Disordered regions lie at residues methionine 1–valine 32 and arginine 171–proline 192. Residues glutamate 175 to proline 186 show a composition bias toward low complexity. Phosphoserine is present on residues serine 237 and serine 241. Disordered stretches follow at residues serine 302–aspartate 335 and glutamate 549–lysine 569. Positions alanine 557–serine 568 are enriched in polar residues.

This is an uncharacterized protein from Rattus norvegicus (Rat).